Consider the following 499-residue polypeptide: Glycerol kinase (499 aa).

Position 13 (Thr-13) interacts with ADP. Thr-13, Thr-14, and Ser-15 together coordinate ATP. Thr-13 is a sn-glycerol 3-phosphate binding site. An ADP-binding site is contributed by Arg-17. Residues Arg-83, Glu-84, Tyr-135, and Asp-245 each contribute to the sn-glycerol 3-phosphate site. Glycerol contacts are provided by Arg-83, Glu-84, Tyr-135, Asp-245, and Gln-246. Positions 267 and 310 each coordinate ADP. ATP is bound by residues Thr-267, Gly-310, Gln-314, and Ala-411. The ADP site is built by Ala-411 and Asn-415.

This sequence belongs to the FGGY kinase family.

The catalysed reaction is glycerol + ATP = sn-glycerol 3-phosphate + ADP + H(+). It participates in polyol metabolism; glycerol degradation via glycerol kinase pathway; sn-glycerol 3-phosphate from glycerol: step 1/1. Inhibited by fructose 1,6-bisphosphate (FBP). Its function is as follows. Key enzyme in the regulation of glycerol uptake and metabolism. Catalyzes the phosphorylation of glycerol to yield sn-glycerol 3-phosphate. This chain is Glycerol kinase, found in Xylella fastidiosa (strain 9a5c).